The primary structure comprises 335 residues: ATP-dependent 6-phosphofructokinase (335 aa).

ATP is bound at residue Gly-11. Residue 21-25 participates in ADP binding; sequence RAVVR. Residues 72 to 73 and 102 to 105 contribute to the ATP site; these read RY and GDGS. Asp-103 contacts Mg(2+). 125–127 is a binding site for substrate; it reads TID. The active-site Proton acceptor is Asp-127. Arg-154 contacts ADP. Residues Arg-162 and 169 to 171 each bind substrate; that span reads MGR. Residues 185–187 and 213–215 contribute to the ADP site; these read GAD and KKH. Substrate is bound by residues Glu-222, Arg-244, and 250–253; that span reads HIQR.

This sequence belongs to the phosphofructokinase type A (PFKA) family. ATP-dependent PFK group I subfamily. Prokaryotic clade 'B1' sub-subfamily. Homotetramer. Requires Mg(2+) as cofactor.

Its subcellular location is the cytoplasm. The enzyme catalyses beta-D-fructose 6-phosphate + ATP = beta-D-fructose 1,6-bisphosphate + ADP + H(+). Its pathway is carbohydrate degradation; glycolysis; D-glyceraldehyde 3-phosphate and glycerone phosphate from D-glucose: step 3/4. Allosterically activated by ADP and other diphosphonucleosides, and allosterically inhibited by phosphoenolpyruvate. Its function is as follows. Catalyzes the phosphorylation of D-fructose 6-phosphate to fructose 1,6-bisphosphate by ATP, the first committing step of glycolysis. This is ATP-dependent 6-phosphofructokinase from Streptococcus pneumoniae (strain ATCC BAA-255 / R6).